The sequence spans 158 residues: Large ribosomal subunit protein bL21 (158 aa).

The tract at residues 106-158 (SKPKKAAAKPIKEEATAAKGTKDTAVEKKAEKTAEKKTASQKKAAVASKSKKD) is disordered. Over residues 115–143 (PIKEEATAAKGTKDTAVEKKAEKTAEKKT) the composition is skewed to basic and acidic residues. The segment covering 146–158 (QKKAAVASKSKKD) has biased composition (low complexity).

It belongs to the bacterial ribosomal protein bL21 family. As to quaternary structure, part of the 50S ribosomal subunit. Contacts protein L20.

Functionally, this protein binds to 23S rRNA in the presence of protein L20. The protein is Large ribosomal subunit protein bL21 of Bartonella tribocorum (strain CIP 105476 / IBS 506).